Consider the following 406-residue polypeptide: Purine nucleoside permease (406 aa).

Residues 1 to 22 (MKLSTLFTLATTISTLTTFTIA) form the signal peptide.

Belongs to the NUP family.

Its activity is regulated as follows. Mammalian nucleoside transport inhibitors dipyridamole and NBMPR inhibit adenosine transport by NUP. Functionally, nucleoside permease that transports adenosine and guanosine. Does not show any transport activities towards cytidine, adenine, guanine, uridine, and uracil. This chain is Purine nucleoside permease, found in Candida albicans (Yeast).